A 260-amino-acid chain; its full sequence is Small ribosomal subunit protein uS2 (260 aa).

This sequence belongs to the universal ribosomal protein uS2 family.

The chain is Small ribosomal subunit protein uS2 (rpsB) from Borreliella burgdorferi (strain ATCC 35210 / DSM 4680 / CIP 102532 / B31) (Borrelia burgdorferi).